We begin with the raw amino-acid sequence, 414 residues long: Serine hydroxymethyltransferase (414 aa).

(6S)-5,6,7,8-tetrahydrofolate is bound by residues L121 and 125–127 (GHL). Residue K229 is modified to N6-(pyridoxal phosphate)lysine.

The protein belongs to the SHMT family. In terms of assembly, homodimer. It depends on pyridoxal 5'-phosphate as a cofactor.

The protein resides in the cytoplasm. The enzyme catalyses (6R)-5,10-methylene-5,6,7,8-tetrahydrofolate + glycine + H2O = (6S)-5,6,7,8-tetrahydrofolate + L-serine. It participates in one-carbon metabolism; tetrahydrofolate interconversion. The protein operates within amino-acid biosynthesis; glycine biosynthesis; glycine from L-serine: step 1/1. Catalyzes the reversible interconversion of serine and glycine with tetrahydrofolate (THF) serving as the one-carbon carrier. This reaction serves as the major source of one-carbon groups required for the biosynthesis of purines, thymidylate, methionine, and other important biomolecules. Also exhibits THF-independent aldolase activity toward beta-hydroxyamino acids, producing glycine and aldehydes, via a retro-aldol mechanism. The polypeptide is Serine hydroxymethyltransferase (Albidiferax ferrireducens (strain ATCC BAA-621 / DSM 15236 / T118) (Rhodoferax ferrireducens)).